The primary structure comprises 109 residues: uncharacterized protein (109 aa).

Residues 63-85 traverse the membrane as a helical segment; the sequence is LFVKTFFACTYIIMLAFQVYIFL.

The protein resides in the membrane. This is an uncharacterized protein from Saccharomyces cerevisiae (strain ATCC 204508 / S288c) (Baker's yeast).